A 146-amino-acid chain; its full sequence is Hemoglobin subunit delta (146 aa).

In terms of domain architecture, Globin spans 2–146; that stretch reads HLTGDEKSAV…VATALAHKYH (145 aa). Phosphoserine is present on serine 50. Heme b is bound by residues histidine 63 and histidine 92.

Belongs to the globin family. Heterotetramer of two delta chains and two alpha chains. As to expression, red blood cells.

The polypeptide is Hemoglobin subunit delta (HBD) (Aotus trivirgatus (Three-striped night monkey)).